A 221-amino-acid polypeptide reads, in one-letter code: Oxaloacetate tautomerase FAHD1, mitochondrial (221 aa).

The N-terminal 24 residues, 1 to 24, are a transit peptide targeting the mitochondrion; that stretch reads MASTKPLSRFWEWGKNIVCVGRNY. R22 lines the oxalate pocket. A Phosphoserine modification is found at S37. Residues E68, E70, and D99 each contribute to the Mg(2+) site. At K110 the chain carries N6-acetyllysine. N6-succinyllysine is present on K112. K120 serves as a coordination point for oxalate.

The protein belongs to the FAH family. As to quaternary structure, homodimer. Mg(2+) serves as cofactor. Requires Mn(2+) as cofactor. As to expression, ubiquitous with higher expression in the liver and the kidney (at protein level).

It localises to the mitochondrion. The protein resides in the cytoplasm. It is found in the cytosol. It catalyses the reaction oxaloacetate = enol-oxaloacetate. The catalysed reaction is oxaloacetate + H(+) = pyruvate + CO2. It carries out the reaction a 3-acylpyruvate + H2O = a carboxylate + pyruvate + H(+). The enzyme catalyses acetylpyruvate + H2O = acetate + pyruvate + H(+). It catalyses the reaction 3-fumarylpyruvate + H2O = fumarate + pyruvate + H(+). Oxaloacetate decarboxylation is potently and competitively inhibited by oxalate. In terms of biological role, tautomerase that converts enol-oxaloacetate, a strong inhibitor of succinate dehydrogenase, to the physiological keto form of oxaloacetate. It is thereby required to maximize aerobic respiration efficiency by preventing succinate dehydrogenase inhibition. Also acts as a weak oxaloacetate decarboxylase (ODx), catalyzing the decarboxylation of oxaloacetate (OAA) to pyruvate and CO(2), and as such is likely a regulatory enzyme in the TCA cycle. Also displays acylpyruvase activity, being able to hydrolyze acetylpyruvate and fumarylpyruvate in vitro. The protein is Oxaloacetate tautomerase FAHD1, mitochondrial of Mus musculus (Mouse).